A 313-amino-acid chain; its full sequence is Methionyl-tRNA formyltransferase (313 aa).

113–116 (SLLP) lines the (6S)-5,6,7,8-tetrahydrofolate pocket.

This sequence belongs to the Fmt family.

It carries out the reaction L-methionyl-tRNA(fMet) + (6R)-10-formyltetrahydrofolate = N-formyl-L-methionyl-tRNA(fMet) + (6S)-5,6,7,8-tetrahydrofolate + H(+). In terms of biological role, attaches a formyl group to the free amino group of methionyl-tRNA(fMet). The formyl group appears to play a dual role in the initiator identity of N-formylmethionyl-tRNA by promoting its recognition by IF2 and preventing the misappropriation of this tRNA by the elongation apparatus. The protein is Methionyl-tRNA formyltransferase of Francisella tularensis subsp. novicida (strain U112).